A 389-amino-acid chain; its full sequence is Chalcone synthase 9 (389 aa).

Cysteine 164 is an active-site residue.

The protein belongs to the thiolase-like superfamily. Chalcone/stilbene synthases family.

It catalyses the reaction (E)-4-coumaroyl-CoA + 3 malonyl-CoA + 3 H(+) = 2',4,4',6'-tetrahydroxychalcone + 3 CO2 + 4 CoA. It functions in the pathway secondary metabolite biosynthesis; flavonoid biosynthesis. The primary product of this enzyme is 4,2',4',6'-tetrahydroxychalcone (also termed naringenin-chalcone or chalcone) which can under specific conditions spontaneously isomerize into naringenin. The polypeptide is Chalcone synthase 9 (CHS9) (Medicago sativa (Alfalfa)).